The following is a 4250-amino-acid chain: Dynein axonemal heavy chain 1 (4250 aa).

A disordered region spans residues 1–73 (MEECNKEGPS…KSPLTGTDKK (73 aa)). The stem stretch occupies residues 1-1527 (MEECNKEGPS…YIRAVNAEFI (1527 aa)). Residues 24 to 42 (PESHDLEKILQESNYHPER) are compositionally biased toward basic and acidic residues. Pro residues predominate over residues 46–55 (NPDPKTPPLP). 4 AAA regions span residues 1528 to 1749 (YGYE…VISA), 1809 to 2042 (QAIR…NTVK), 2174 to 2434 (TMMP…VFQG), and 2532 to 2784 (DYNQ…LARH). The GPAGTGKT motif signature appears at 1566–1573 (GPAGTGKT). ATP is bound at residue 1566–1573 (GPAGTGKT). The short motif at 1616 to 1622 (CFDEFNR) is the CFDEFNR motif element. Residues 1847–1854 (GPTGSGKS), 2212–2219 (GPTGTGKT), and 2571–2578 (GVGGSGRS) each bind ATP. Residues 2799–3097 (FSILIGQKKM…EELEMKCEQC (299 aa)) are stalk. Residues 3045-3128 (LREAQDDLEV…QETVENLENM (84 aa)) are a coiled coil. AAA stretches follow at residues 3182–3412 (LGNP…EIQA) and 3625–3844 (MQDF…QLKM).

This sequence belongs to the dynein heavy chain family. In terms of assembly, consists of at least two heavy chains and a number of intermediate and light chains.

The protein localises to the cytoplasm. It is found in the cytoskeleton. Its subcellular location is the cilium axoneme. It localises to the cell projection. The protein resides in the cilium. The protein localises to the flagellum. Force generating protein of cilia required for sperm flagellum motility. Produces force towards the minus ends of microtubules. Dynein has ATPase activity; the force-producing power stroke is thought to occur on release of ADP. Required in spermatozoa for the formation of the inner dynein arms and biogenesis of the axoneme. In Mus musculus (Mouse), this protein is Dynein axonemal heavy chain 1.